We begin with the raw amino-acid sequence, 541 residues long: Alpha-zingiberene synthase (541 aa).

Residues D296, D300, D437, T441, and E445 each contribute to the Mg(2+) site. Residues 296–300 carry the DDXXD motif motif; the sequence is DDIYD.

It belongs to the terpene synthase family. Mg(2+) serves as cofactor. The cofactor is Mn(2+).

The enzyme catalyses (2E,6E)-farnesyl diphosphate = alpha-zingiberene + diphosphate. It participates in secondary metabolite biosynthesis; terpenoid biosynthesis. Functionally, sesquiterpene synthase that catalyzes the formation of alpha-zingiberene and other sesquiterpenes from trans,trans-farnesyl diphosphate (FPP). May have an additional monoterpene synthase activity. The polypeptide is Alpha-zingiberene synthase (ZIS) (Ocimum basilicum (Sweet basil)).